Here is a 335-residue protein sequence, read N- to C-terminus: Ferredoxin--NADP reductase (335 aa).

Positions 34, 42, 47, 87, 121, 287, and 328 each coordinate FAD.

This sequence belongs to the ferredoxin--NADP reductase type 2 family. Homodimer. It depends on FAD as a cofactor.

It catalyses the reaction 2 reduced [2Fe-2S]-[ferredoxin] + NADP(+) + H(+) = 2 oxidized [2Fe-2S]-[ferredoxin] + NADPH. This Rickettsia felis (strain ATCC VR-1525 / URRWXCal2) (Rickettsia azadi) protein is Ferredoxin--NADP reductase.